Consider the following 332-residue polypeptide: Glycerol-3-phosphate dehydrogenase [NAD(P)+] (332 aa).

Positions 11, 12, 32, 33, and 106 each coordinate NADPH. Sn-glycerol 3-phosphate contacts are provided by K106 and G136. NADPH is bound at residue A140. K191, D244, S254, R255, and N256 together coordinate sn-glycerol 3-phosphate. K191 functions as the Proton acceptor in the catalytic mechanism. R255 provides a ligand contact to NADPH. The NADPH site is built by V280 and E282.

This sequence belongs to the NAD-dependent glycerol-3-phosphate dehydrogenase family.

It localises to the cytoplasm. It carries out the reaction sn-glycerol 3-phosphate + NAD(+) = dihydroxyacetone phosphate + NADH + H(+). The enzyme catalyses sn-glycerol 3-phosphate + NADP(+) = dihydroxyacetone phosphate + NADPH + H(+). Its pathway is membrane lipid metabolism; glycerophospholipid metabolism. Functionally, catalyzes the reduction of the glycolytic intermediate dihydroxyacetone phosphate (DHAP) to sn-glycerol 3-phosphate (G3P), the key precursor for phospholipid synthesis. This is Glycerol-3-phosphate dehydrogenase [NAD(P)+] from Corynebacterium aurimucosum (strain ATCC 700975 / DSM 44827 / CIP 107346 / CN-1) (Corynebacterium nigricans).